The primary structure comprises 290 residues: Elongation factor Ts (290 aa).

The involved in Mg(2+) ion dislocation from EF-Tu stretch occupies residues 81–84 (TDFV).

It belongs to the EF-Ts family.

The protein localises to the cytoplasm. Associates with the EF-Tu.GDP complex and induces the exchange of GDP to GTP. It remains bound to the aminoacyl-tRNA.EF-Tu.GTP complex up to the GTP hydrolysis stage on the ribosome. In Vesicomyosocius okutanii subsp. Calyptogena okutanii (strain HA), this protein is Elongation factor Ts.